Consider the following 96-residue polypeptide: Co-chaperonin GroES (96 aa).

The protein belongs to the GroES chaperonin family. Heptamer of 7 subunits arranged in a ring. Interacts with the chaperonin GroEL.

Its subcellular location is the cytoplasm. Together with the chaperonin GroEL, plays an essential role in assisting protein folding. The GroEL-GroES system forms a nano-cage that allows encapsulation of the non-native substrate proteins and provides a physical environment optimized to promote and accelerate protein folding. GroES binds to the apical surface of the GroEL ring, thereby capping the opening of the GroEL channel. The protein is Co-chaperonin GroES of Geotalea daltonii (strain DSM 22248 / JCM 15807 / FRC-32) (Geobacter daltonii).